Consider the following 299-residue polypeptide: Urease accessory protein UreD (299 aa).

The protein belongs to the UreD family. As to quaternary structure, ureD, UreF and UreG form a complex that acts as a GTP-hydrolysis-dependent molecular chaperone, activating the urease apoprotein by helping to assemble the nickel containing metallocenter of UreC. The UreE protein probably delivers the nickel.

It localises to the cytoplasm. In terms of biological role, required for maturation of urease via the functional incorporation of the urease nickel metallocenter. The chain is Urease accessory protein UreD from Natronomonas pharaonis (strain ATCC 35678 / DSM 2160 / CIP 103997 / JCM 8858 / NBRC 14720 / NCIMB 2260 / Gabara) (Halobacterium pharaonis).